A 306-amino-acid chain; its full sequence is Ornithine carbamoyltransferase (306 aa).

Residues 51–54, glutamine 78, arginine 102, and 129–132 each bind carbamoyl phosphate; these read STRT and HPVQ. L-ornithine-binding positions include asparagine 159, aspartate 223, and 227 to 228; that span reads SM. Carbamoyl phosphate-binding positions include 263–264 and arginine 291; that span reads CL.

Belongs to the aspartate/ornithine carbamoyltransferase superfamily. OTCase family.

It localises to the cytoplasm. It catalyses the reaction carbamoyl phosphate + L-ornithine = L-citrulline + phosphate + H(+). The protein operates within amino-acid biosynthesis; L-arginine biosynthesis; L-arginine from L-ornithine and carbamoyl phosphate: step 1/3. Reversibly catalyzes the transfer of the carbamoyl group from carbamoyl phosphate (CP) to the N(epsilon) atom of ornithine (ORN) to produce L-citrulline. The chain is Ornithine carbamoyltransferase from Sulfurovum sp. (strain NBC37-1).